We begin with the raw amino-acid sequence, 291 residues long: MSMDCLSYFFNYDPPVQLQDCFIPEMDMIIPETDSFFFQSQPQLEFHQPLFQEEAPSQTHFDPFCDQFLSPQEIFLPNPKNEIFNETHDLDFFLPTPKRQRLVNSSYNCNTQNHFQSRNPNFFDPFGDTDFVPESCTFQEFRVPDFSLAFKVGRGDQDDSKKPTLSSQSIAARGRRRRIAEKTHELGKLIPGGNKLNTAEMFQAAAKYVKFLQSQVGILQLMQTTKKGSSNVQMETQYLLESQAIQEKLSTEEVCLVPCEMVQDLTTEETICRTPNISREINKLLSKHLAN.

In terms of domain architecture, bHLH spans 163 to 212; it reads PTLSSQSIAARGRRRRIAEKTHELGKLIPGGNKLNTAEMFQAAAKYVKFL.

As to quaternary structure, homodimer. Expressed constitutively in roots, leaves, stems, and flowers.

The protein resides in the nucleus. In Arabidopsis thaliana (Mouse-ear cress), this protein is Transcription factor bHLH53 (BHLH53).